Consider the following 93-residue polypeptide: Large ribosomal subunit protein uL23cz/uL23cy (93 aa).

This sequence belongs to the universal ribosomal protein uL23 family. Part of the 50S ribosomal subunit.

It is found in the plastid. The protein resides in the chloroplast. In terms of biological role, binds to 23S rRNA. The sequence is that of Large ribosomal subunit protein uL23cz/uL23cy (rpl23-A) from Oryza nivara (Indian wild rice).